A 250-amino-acid chain; its full sequence is CCN family member 5 (250 aa).

A signal peptide spans 1 to 23; it reads MRGSPLIRLLATSFLCLLSMVCA. Disulfide bonds link Cys-22–Cys-50, Cys-26–Cys-52, Cys-32–Cys-53, Cys-39–Cys-56, Cys-64–Cys-78, and Cys-70–Cys-100. Residues 24–103 enclose the IGFBP N-terminal domain; the sequence is QLCRTPCTCP…DEDDGDCEVN (80 aa). One can recognise a VWFC domain in the interval 98-164; that stretch reads GDCEVNGRRY…GKCCPEWVCD (67 aa). A TSP type-1 domain is found at 194–238; that stretch reads WPNWSTAWGPCSTTCGLGIATRVSNQNRFCQLEIQRRLCLPRPCL. Asn-196 carries N-linked (GlcNAc...) asparagine glycosylation.

The protein belongs to the CCN family.

The protein localises to the secreted. In terms of biological role, may play an important role in modulating bone turnover. Promotes the adhesion of osteoblast cells and inhibits the binding of fibrinogen to integrin receptors. In addition, inhibits osteocalcin production. This chain is CCN family member 5 (Ccn5), found in Rattus norvegicus (Rat).